Consider the following 191-residue polypeptide: Large ribosomal subunit protein uL5 (191 aa).

It belongs to the universal ribosomal protein uL5 family. As to quaternary structure, part of the 50S ribosomal subunit; part of the 5S rRNA/L5/L18/L25 subcomplex. Contacts the 5S rRNA and the P site tRNA. Forms a bridge to the 30S subunit in the 70S ribosome.

This is one of the proteins that bind and probably mediate the attachment of the 5S RNA into the large ribosomal subunit, where it forms part of the central protuberance. In the 70S ribosome it contacts protein S13 of the 30S subunit (bridge B1b), connecting the 2 subunits; this bridge is implicated in subunit movement. Contacts the P site tRNA; the 5S rRNA and some of its associated proteins might help stabilize positioning of ribosome-bound tRNAs. The chain is Large ribosomal subunit protein uL5 from Salinibacter ruber (strain DSM 13855 / M31).